The sequence spans 298 residues: 4-hydroxy-tetrahydrodipicolinate synthase (298 aa).

A pyruvate-binding site is contributed by Thr51. The active-site Proton donor/acceptor is the Tyr139. The Schiff-base intermediate with substrate role is filled by Lys167. Ile209 lines the pyruvate pocket.

The protein belongs to the DapA family. In terms of assembly, homotetramer; dimer of dimers.

The protein resides in the cytoplasm. It carries out the reaction L-aspartate 4-semialdehyde + pyruvate = (2S,4S)-4-hydroxy-2,3,4,5-tetrahydrodipicolinate + H2O + H(+). It functions in the pathway amino-acid biosynthesis; L-lysine biosynthesis via DAP pathway; (S)-tetrahydrodipicolinate from L-aspartate: step 3/4. In terms of biological role, catalyzes the condensation of (S)-aspartate-beta-semialdehyde [(S)-ASA] and pyruvate to 4-hydroxy-tetrahydrodipicolinate (HTPA). This chain is 4-hydroxy-tetrahydrodipicolinate synthase, found in Haemophilus influenzae (strain PittEE).